We begin with the raw amino-acid sequence, 158 residues long: Ribonuclease H (158 aa).

Residues 3–144 form the RNase H type-1 domain; it reads ELKLIHIFTD…CDQLARAAAE (142 aa). Residues D12, E50, D72, and D136 each contribute to the Mg(2+) site.

The protein belongs to the RNase H family. Monomer. Mg(2+) is required as a cofactor.

It localises to the cytoplasm. It carries out the reaction Endonucleolytic cleavage to 5'-phosphomonoester.. Functionally, endonuclease that specifically degrades the RNA of RNA-DNA hybrids. The protein is Ribonuclease H of Shewanella sp. (strain MR-7).